Reading from the N-terminus, the 533-residue chain is MVTITSWKRFKEYLYYDQELGLLLDISRMNFSAEFLRSMAEPMREAYHQLQLLEKGALANPDEGRMVGHYWLRNPDLAPTEEIVQDIKETLKEILDFAEQIHSGRLQGEKGNPFRNILLVGVGGSILGPRFVADALASSRDKMKAFFIDNGDPDGIDRVLSRIGEELPATLCLIISKSGGTIETRNGMLEVRRAYKEAGLSFPDHAVAITQRGSQLDKLSQKEGWLRAFPMWDWVGGRTSLLSAVGLLSLALQGIDVAGLLQGAKDCDGRTRRPDTLDNPGALLALMWYYSTQGQGGKQMVVLPYKDRLELFTKYLQQLIMESLGKEKNLQGETVHQGITVYGNKGSSDQHSYLQQLLEGPDNFFVTFIEVLKDRQGPSTYMEENSTSGEYLQAFLLGTREALTQKGRESLTITVKEVNAYTIGVLIALFERAVSIYALLVGINAYHQPAVEMGKKAAGQAIQLKNNIVEFLKSHPGKKFSVSELALAIQEEEHQEMVFKLLLHLTTNPEHGVNMEPGEPWPESRFFVGGPIS.

The active-site Proton donor is glutamate 322. Active-site residues include histidine 351 and lysine 455.

The protein belongs to the GPI family.

Its subcellular location is the cytoplasm. It carries out the reaction alpha-D-glucose 6-phosphate = beta-D-fructose 6-phosphate. The protein operates within carbohydrate biosynthesis; gluconeogenesis. It participates in carbohydrate degradation; glycolysis; D-glyceraldehyde 3-phosphate and glycerone phosphate from D-glucose: step 2/4. Its function is as follows. Catalyzes the reversible isomerization of glucose-6-phosphate to fructose-6-phosphate. This is Glucose-6-phosphate isomerase from Desulfitobacterium hafniense (strain Y51).